Consider the following 678-residue polypeptide: Amino-acid acetyltransferase, mitochondrial (678 aa).

The tract at residues 86–111 is disordered; that stretch reads LKAQHPPKAQTEPTTGHSKGTVTQSL. Polar residues predominate over residues 96–111; sequence TEPTTGHSKGTVTQSL. The N-acetyltransferase domain maps to 499 to 668; sequence NRPRLSLDDP…YEQVCRSIQP (170 aa).

Belongs to the acetyltransferase family.

It is found in the mitochondrion. It catalyses the reaction L-glutamate + acetyl-CoA = N-acetyl-L-glutamate + CoA + H(+). It functions in the pathway amino-acid biosynthesis; L-arginine biosynthesis; N(2)-acetyl-L-ornithine from L-glutamate: step 1/4. Functionally, N-acetylglutamate synthase involved in arginine biosynthesis. This Aspergillus oryzae (strain ATCC 42149 / RIB 40) (Yellow koji mold) protein is Amino-acid acetyltransferase, mitochondrial (arg2).